Here is a 418-residue protein sequence, read N- to C-terminus: F-box protein At1g10780 (418 aa).

An F-box domain is found at methionine 1–asparagine 47.

This chain is F-box protein At1g10780, found in Arabidopsis thaliana (Mouse-ear cress).